Consider the following 333-residue polypeptide: uncharacterized protein (333 aa).

This sequence to bacterial alkanal monooxygenase alpha and beta chains.

This is an uncharacterized protein from Bacillus subtilis (strain 168).